The primary structure comprises 446 residues: Tubulin beta chain (446 aa).

Positions 11, 69, 138, 142, 143, 144, 204, and 226 each coordinate GTP. Residue Glu-69 participates in Mg(2+) binding. Positions Glu-421–Glu-446 are disordered. Over residues Gly-429–Glu-446 the composition is skewed to acidic residues.

This sequence belongs to the tubulin family. Dimer of alpha and beta chains. A typical microtubule is a hollow water-filled tube with an outer diameter of 25 nm and an inner diameter of 15 nM. Alpha-beta heterodimers associate head-to-tail to form protofilaments running lengthwise along the microtubule wall with the beta-tubulin subunit facing the microtubule plus end conferring a structural polarity. Microtubules usually have 13 protofilaments but different protofilament numbers can be found in some organisms and specialized cells. The cofactor is Mg(2+).

It localises to the cytoplasm. It is found in the cytoskeleton. In terms of biological role, tubulin is the major constituent of microtubules, a cylinder consisting of laterally associated linear protofilaments composed of alpha- and beta-tubulin heterodimers. Microtubules grow by the addition of GTP-tubulin dimers to the microtubule end, where a stabilizing cap forms. Below the cap, tubulin dimers are in GDP-bound state, owing to GTPase activity of alpha-tubulin. The protein is Tubulin beta chain (TUB2) of Fusarium fujikuroi (Bakanae and foot rot disease fungus).